The chain runs to 659 residues: Interferon-induced GTP-binding protein Mx2 (659 aa).

In terms of domain architecture, Dynamin-type G spans 65 to 338 (DLALPAIAVI…LISHICKSLP (274 aa)). The G1 motif stretch occupies residues 75–82 (GDQSSGKS). 75-82 (GDQSSGKS) contacts GTP. The interval 100–102 (VTR) is G2 motif. A G3 motif region spans residues 176 to 179 (DLPG). Residues 176–180 (DLPGI) and 245–248 (TKPD) each bind GTP. A G4 motif region spans residues 245–248 (TKPD). A G5 motif region spans residues 277-280 (KCRG). Residues 547 to 567 (EAEEEERKHGKSRSSQSKNLQ) form a disordered region. Positions 571–659 (MDEIFQHLNA…AQRRLAKFPG (89 aa)) constitute a GED domain.

Belongs to the TRAFAC class dynamin-like GTPase superfamily. Dynamin/Fzo/YdjA family.

The protein localises to the cytoplasm. In terms of biological role, interferon-induced dynamin-like GTPase with antiviral activity against vesicular stomatitis virus (VSV). This chain is Interferon-induced GTP-binding protein Mx2 (Mx2), found in Rattus norvegicus (Rat).